We begin with the raw amino-acid sequence, 92 residues long: Small ribosomal subunit protein uS19c (92 aa).

This sequence belongs to the universal ribosomal protein uS19 family.

Its subcellular location is the plastid. In terms of biological role, protein S19 forms a complex with S13 that binds strongly to the 16S ribosomal RNA. This chain is Small ribosomal subunit protein uS19c, found in Cuscuta exaltata (Tall dodder).